The primary structure comprises 201 residues: MFAYIKGVLAFFNPSQAIVDVHGVGYLLFIPCRLLGQLPQIGEPVQFYTTYVVREFSHTLYGFLSYQERDIFEILMNVTGIGPKMALSLIGHLSMSELQIAVMRQDLSTLCRVPGVGKKTAERLIVELKDKLAAIGHLDTSDHIEPLTQDPKSKSVQDAMLALINLGYNQTTAQKAIKQGMKELPEEIDLAQLITVALKHV.

The tract at residues methionine 1 to leucine 64 is domain I. A domain II region spans residues serine 65–histidine 143. The segment at isoleucine 144–serine 153 is flexible linker. Positions serine 153–valine 201 are domain III.

This sequence belongs to the RuvA family. In terms of assembly, homotetramer. Forms an RuvA(8)-RuvB(12)-Holliday junction (HJ) complex. HJ DNA is sandwiched between 2 RuvA tetramers; dsDNA enters through RuvA and exits via RuvB. An RuvB hexamer assembles on each DNA strand where it exits the tetramer. Each RuvB hexamer is contacted by two RuvA subunits (via domain III) on 2 adjacent RuvB subunits; this complex drives branch migration. In the full resolvosome a probable DNA-RuvA(4)-RuvB(12)-RuvC(2) complex forms which resolves the HJ.

The protein resides in the cytoplasm. Functionally, the RuvA-RuvB-RuvC complex processes Holliday junction (HJ) DNA during genetic recombination and DNA repair, while the RuvA-RuvB complex plays an important role in the rescue of blocked DNA replication forks via replication fork reversal (RFR). RuvA specifically binds to HJ cruciform DNA, conferring on it an open structure. The RuvB hexamer acts as an ATP-dependent pump, pulling dsDNA into and through the RuvAB complex. HJ branch migration allows RuvC to scan DNA until it finds its consensus sequence, where it cleaves and resolves the cruciform DNA. In Protochlamydia amoebophila (strain UWE25), this protein is Holliday junction branch migration complex subunit RuvA.